A 655-amino-acid polypeptide reads, in one-letter code: Tumor necrosis factor receptor superfamily member 21 (655 aa).

A signal peptide spans 1-41 (MGTSASSITALASCSRIAGQVGATMVAGSLLLLGFLSTITA). Topologically, residues 42-349 (QPEQKTLSLT…PHKHFDINEH (308 aa)) are extracellular. 4 TNFR-Cys repeats span residues 50-88 (LTGT…LRVC), 90-131 (SCPS…DREC), 133-167 (CPPG…EDVR), and 170-211 (QCAR…DNVC). 9 cysteine pairs are disulfide-bonded: Cys-67–Cys-80, Cys-70–Cys-88, Cys-91–Cys-106, Cys-109–Cys-123, Cys-113–Cys-131, Cys-133–Cys-144, Cys-150–Cys-168, Cys-171–Cys-186, and Cys-192–Cys-211. An N-linked (GlcNAc...) asparagine glycan is attached at Asn-82. Disordered stretches follow at residues 214 to 306 (HLSS…GPHH) and 318 to 338 (EATG…HPRQ). A compositionally biased stretch (low complexity) spans 216–225 (SSSSTTPSSP). Polar residues-rich tracts occupy residues 241-262 (VPSS…TASV) and 276-302 (PDNT…THQQ). 3 N-linked (GlcNAc...) asparagine glycosylation sites follow: Asn-252, Asn-278, and Asn-289. A helical transmembrane segment spans residues 350–370 (LPWMIVLFLLLVLVLIVVCSI). The S-palmitoyl cysteine moiety is linked to residue Cys-368. Over 371 to 655 (RKSSRTLKKG…SVYSHLPDLL (285 aa)) the chain is Cytoplasmic. In terms of domain architecture, Death spans 415–498 (GIDILKLVAA…DVVEKIRGLM (84 aa)).

Associates with TRADD. Interacts with NGFR. Interacts with CASP8. In terms of processing, oxidized in response to reactive oxygen species (ROS), leading to endocytosis. In terms of tissue distribution, detected in brain (at protein level). Detected in corpus callosum oligodendrocytes. Detected in embryonic and adult brain.

It is found in the cell membrane. In terms of biological role, promotes apoptosis, possibly via a pathway that involves the activation of NF-kappa-B. Can also promote apoptosis mediated by BAX and by the release of cytochrome c from the mitochondria into the cytoplasm. Trophic-factor deprivation triggers the cleavage of surface APP by beta-secretase to release sAPP-beta which is further cleaved to release an N-terminal fragment of APP (N-APP). Negatively regulates oligodendrocyte survival, maturation and myelination. Plays a role in signaling cascades triggered by stimulation of T-cell receptors, in the adaptive immune response and in the regulation of T-cell differentiation and proliferation. Negatively regulates T-cell responses and the release of cytokines such as IL4, IL5, IL10, IL13 and IFNG by Th2 cells. Negatively regulates the production of IgG, IgM and IgM in response to antigens. May inhibit the activation of JNK in response to T-cell stimulation. Also acts as a regulator of pyroptosis: recruits CASP8 in response to reactive oxygen species (ROS) and subsequent oxidation, leading to activation of GSDMC. The chain is Tumor necrosis factor receptor superfamily member 21 (Tnfrsf21) from Rattus norvegicus (Rat).